The sequence spans 97 residues: Small ribosomal subunit protein bS20 (97 aa).

Belongs to the bacterial ribosomal protein bS20 family.

Binds directly to 16S ribosomal RNA. The sequence is that of Small ribosomal subunit protein bS20 from Prochlorococcus marinus (strain AS9601).